A 330-amino-acid polypeptide reads, in one-letter code: Taste receptor type 2 member 117 (330 aa).

The Extracellular portion of the chain corresponds to 1-16; it reads MKHFWKILSVISQSTL. Residues 17–37 form a helical membrane-spanning segment; sequence SVILIVELVIGIIGNGFMVLV. Over 38 to 53 the chain is Cytoplasmic; that stretch reads HCMDWVKKKKMSLVNQ. The chain crosses the membrane as a helical span at residues 54-74; sequence ILTALSISRIFQLCLLFISLV. The Extracellular segment spans residues 75–95; that stretch reads INFSYTDLTTSSRMIQVMYNA. N-linked (GlcNAc...) asparagine glycosylation is present at Asn-76. Residues 96–116 traverse the membrane as a helical segment; that stretch reads WILANHFSIWIATCLTVLYFL. Over 117 to 135 the chain is Cytoplasmic; it reads KIANFSNSFFLYLKWRVEK. Residues 136–156 form a helical membrane-spanning segment; it reads VVSVTLLVSLLLLILNILLTN. Residues 157–190 are Extracellular-facing; that stretch reads LETDMWTNEYQRNISCSFSSHYYAKCHRQVLRLH. A glycan (N-linked (GlcNAc...) asparagine) is linked at Asn-169. Residues 191–211 traverse the membrane as a helical segment; that stretch reads IIFLSVPVVLSLSTFLLLIFS. The Cytoplasmic segment spans residues 212–239; sequence LWTHHKRMQQHVQGGRDARTTAHFKALQ. A helical transmembrane segment spans residues 240 to 260; it reads TVIAFFLLYSIFILSVLIQIW. Residues 261–269 lie on the Extracellular side of the membrane; sequence KYELLKKNL. The helical transmembrane segment at 270-290 threads the bilayer; sequence FVVFCEVVYIAFPTFHSYILI. Residues 291–330 lie on the Cytoplasmic side of the membrane; that stretch reads VGDMKLRQACLPLCIIAAEIQTTLCRNFRSLKYFRLCCIF.

It belongs to the G-protein coupled receptor T2R family.

Its subcellular location is the membrane. Its function is as follows. Putative taste receptor which may play a role in the perception of bitterness. The polypeptide is Taste receptor type 2 member 117 (Mus musculus (Mouse)).